A 137-amino-acid polypeptide reads, in one-letter code: Large-conductance mechanosensitive channel (137 aa).

A run of 2 helical transmembrane segments spans residues 9–29 (AFAV…GAAF) and 79–99 (IQSV…VKAI).

It belongs to the MscL family. In terms of assembly, homopentamer.

The protein localises to the cell inner membrane. Functionally, channel that opens in response to stretch forces in the membrane lipid bilayer. May participate in the regulation of osmotic pressure changes within the cell. This chain is Large-conductance mechanosensitive channel, found in Pseudomonas fluorescens (strain Pf0-1).